The following is a 279-amino-acid chain: Inhibitor of growth protein 1 (279 aa).

A disordered region spans residues 115 to 206 (AHQDISDGTG…EASPADLPID (92 aa)). Lys-135 is covalently cross-linked (Glycyl lysine isopeptide (Lys-Gly) (interchain with G-Cter in SUMO2)). Over residues 154 to 171 (RNNENRENASNNHDHDDI) the composition is skewed to basic and acidic residues. The span at 179-191 (KKAKTSKKKKRSK) shows a compositional bias: basic residues. Residues 210-259 (PTYCLCNQVSYGEMIGCDNDECPIEWFHFSCVGLNHKPKGKWYCPKCRGE) form a PHD-type zinc finger. Positions 213, 215, 226, 231, 237, 240, 253, and 256 each coordinate Zn(2+). Residues 262 to 279 (KTMDKALEKSKKERAYNR) form a PBR region.

This sequence belongs to the ING family. In terms of assembly, interacts with H3K4me3 and to a lesser extent with H3K4me2. Isoform 2 interacts with RSL1D1. As to expression, in the adult, widely expressed with highest levels in thymus and testis.

It is found in the nucleus. Isoform 1 inhibits p53-dependent transcriptional activation and may function as an oncoprotein. Isoform 2 acts as a negative growth regulator by cooperating with p53 in transcriptional activation of p53-responsive genes and may act as a tumor suppressor. In Mus musculus (Mouse), this protein is Inhibitor of growth protein 1 (Ing1).